A 540-amino-acid chain; its full sequence is Raucaffricine-O-beta-D-glucosidase (540 aa).

Residues Q36, H140, and 185 to 186 (NE) each bind a beta-D-glucoside. Residue E186 is the Proton donor of the active site. The cysteines at positions 221 and 230 are disulfide-linked. Residues Y347, E420, W469, 476–477 (EW), and F485 contribute to the a beta-D-glucoside site. Catalysis depends on E420, which acts as the Nucleophile.

Belongs to the glycosyl hydrolase 1 family.

The enzyme catalyses raucaffricine + H2O = vomilenine + D-glucose. The catalysed reaction is vomilenine + UDP-alpha-D-glucose = raucaffricine + UDP + H(+). Glucosidase specifically involved in alkaloid biosynthesis leading to the accumulation of several alkaloids, including ajmaline, an important plant-derived pharmaceutical used in the treatment of heart disorders. The polypeptide is Raucaffricine-O-beta-D-glucosidase (Rauvolfia serpentina (Serpentine wood)).